We begin with the raw amino-acid sequence, 421 residues long: WD repeat and SOCS box-containing protein 1 (421 aa).

WD repeat units lie at residues Ser124–Asn165, Asp168–Lys208, Ala212–Lys251, Gly254–Glu293, and Ala309–Val346. One can recognise an SOCS box domain in the interval Asp372–Gly421.

Interacts with DIO2. Component of the probable ECS(WSB1) E3 ubiquitin-protein ligase complex which contains CUL5, RNF7/RBX2, Elongin BC complex and WSB1. Component of a probable ECS-like E3 ubiquitin-protein ligase complex which contains CUL5, RBX1, Elongin BC complex and WSB1. Interacts with CUL5, RNF7, ELOB and ELOC. Binds to HIPK2 through WD40 repeats.

It participates in protein modification; protein ubiquitination. In terms of biological role, probable substrate-recognition component of a SCF-like ECS (Elongin-Cullin-SOCS-box protein) E3 ubiquitin ligase complex which mediates the ubiquitination and subsequent proteasomal degradation of target proteins. Recognizes type II iodothyronine deiodinase/DIO2. Confers constitutive instability to HIPK2 through proteasomal degradation. This is WD repeat and SOCS box-containing protein 1 (Wsb1) from Mus musculus (Mouse).